A 122-amino-acid polypeptide reads, in one-letter code: Small ribosomal subunit protein uS13 (122 aa).

The tract at residues 99–122 (RGQRTHTNARTRKGPAKAIAGKKK) is disordered.

Belongs to the universal ribosomal protein uS13 family. In terms of assembly, part of the 30S ribosomal subunit. Forms a loose heterodimer with protein S19. Forms two bridges to the 50S subunit in the 70S ribosome.

Functionally, located at the top of the head of the 30S subunit, it contacts several helices of the 16S rRNA. In the 70S ribosome it contacts the 23S rRNA (bridge B1a) and protein L5 of the 50S subunit (bridge B1b), connecting the 2 subunits; these bridges are implicated in subunit movement. Contacts the tRNAs in the A and P-sites. This is Small ribosomal subunit protein uS13 from Rhizobium etli (strain CIAT 652).